A 277-amino-acid chain; its full sequence is MVESELSYEQIRLNRVEENKKRMGELNLNKLAQSLRVSSSSSSSSKPSPAKPRTMRIPVDFSEVRRSSRAKGPPPSYKEFGLEPLERRPRRSSRRRDLLNRVYASDDARMYAFDRAEKLQSSLDSEYASFTKPMLQSHVTGGFWLGLPLPFCKAHMPKRDVIMTLVDEEEEESQAKYLAQKNGLSGGWRGFAIDHQLVDGDAVVFHLIARTTFKVYIIRVNDDANNDSDGNEVNDDDSDGNEEDRDNDNESNEKQKETVSEGRQLRSSGKRKRRGRK.

A disordered region spans residues 33-94 (QSLRVSSSSS…LERRPRRSSR (62 aa)). Positions 130–221 (FTKPMLQSHV…TFKVYIIRVN (92 aa)) form a DNA-binding region, TF-B3. Acidic residues predominate over residues 224–250 (ANNDSDGNEVNDDDSDGNEEDRDNDNE). Positions 224 to 277 (ANNDSDGNEVNDDDSDGNEEDRDNDNESNEKQKETVSEGRQLRSSGKRKRRGRK) are disordered. The span at 251 to 264 (SNEKQKETVSEGRQ) shows a compositional bias: basic and acidic residues. Basic residues predominate over residues 268 to 277 (SGKRKRRGRK).

The protein localises to the nucleus. In Arabidopsis thaliana (Mouse-ear cress), this protein is B3 domain-containing protein At3g19184.